Here is an 88-residue protein sequence, read N- to C-terminus: UPF0237 protein spr0217 (88 aa).

The ACT domain occupies 4–77 (IITVVGKDKS…QTLNVKINIQ (74 aa)).

This sequence belongs to the UPF0237 family. Homodimer.

This is UPF0237 protein spr0217 from Streptococcus pneumoniae (strain ATCC BAA-255 / R6).